Reading from the N-terminus, the 637-residue chain is Neutral ceramidase (637 aa).

Histidine 34 serves as a coordination point for Mg(2+). Zn(2+)-binding residues include histidine 96 and histidine 204. The active-site Nucleophile is serine 256. Zn(2+) contacts are provided by glutamate 417 and tyrosine 453. Mg(2+) contacts are provided by aspartate 575, aspartate 577, and threonine 580.

The protein belongs to the neutral ceramidase family. It depends on Zn(2+) as a cofactor. Requires Mg(2+) as cofactor.

The enzyme catalyses an N-acylsphing-4-enine + H2O = sphing-4-enine + a fatty acid. It carries out the reaction an N-acylsphinganine + H2O = sphinganine + a fatty acid. The catalysed reaction is an N-acyl-(4R)-4-hydroxysphinganine + H2O = (4R)-hydroxysphinganine + a fatty acid. It catalyses the reaction N-(9Z-octadecenoyl)-sphing-4-enine + H2O = sphing-4-enine + (9Z)-octadecenoate. The enzyme catalyses N-(hexanoyl)sphing-4-enine + H2O = hexanoate + sphing-4-enine. It carries out the reaction N-hexadecanoylsphing-4-enine + H2O = sphing-4-enine + hexadecanoate. The catalysed reaction is N-octadecanoylsphing-4-enine + H2O = sphing-4-enine + octadecanoate. It catalyses the reaction N-eicosanoyl-sphing-4-enine + H2O = eicosanoate + sphing-4-enine. The enzyme catalyses N-(15Z-tetracosenoyl)-sphing-4-enine + H2O = (15Z)-tetracosenoate + sphing-4-enine. It carries out the reaction N-tetracosanoyl-sphing-4-enine + H2O = tetracosanoate + sphing-4-enine. With respect to regulation, 90% of activity is inhibited by nickel, zinc and calcium ions. Magnesium, cobalt, copper and manganese ions inhibit between 50 and 80% of activity. Catalyzes the cleavage of the N-acyl linkage of the ceramides (Cers) to yield sphingosine (Sph) and free fatty acid. Also catalyzes the synthesis of Cers from Sph and fatty acid. Cers containning C6-C24 fatty acids are well hydrolyzed, and Cers with mono unsaturated fatty acids are much more hydrolyzed than those with saturated fatty acids. The polypeptide is Neutral ceramidase (Mycobacterium tuberculosis (strain ATCC 25618 / H37Rv)).